We begin with the raw amino-acid sequence, 251 residues long: 3-deoxy-manno-octulosonate cytidylyltransferase (251 aa).

Belongs to the KdsB family.

The protein resides in the cytoplasm. The enzyme catalyses 3-deoxy-alpha-D-manno-oct-2-ulosonate + CTP = CMP-3-deoxy-beta-D-manno-octulosonate + diphosphate. It participates in nucleotide-sugar biosynthesis; CMP-3-deoxy-D-manno-octulosonate biosynthesis; CMP-3-deoxy-D-manno-octulosonate from 3-deoxy-D-manno-octulosonate and CTP: step 1/1. Its pathway is bacterial outer membrane biogenesis; lipopolysaccharide biosynthesis. Its function is as follows. Activates KDO (a required 8-carbon sugar) for incorporation into bacterial lipopolysaccharide in Gram-negative bacteria. The polypeptide is 3-deoxy-manno-octulosonate cytidylyltransferase (Alcanivorax borkumensis (strain ATCC 700651 / DSM 11573 / NCIMB 13689 / SK2)).